The sequence spans 589 residues: Oligo-1,6-glucosidase IMA3 (589 aa).

The active-site Nucleophile is the aspartate 215. Glutamate 277 serves as the catalytic Proton donor.

This sequence belongs to the glycosyl hydrolase 13 family.

It localises to the cytoplasm. The catalysed reaction is Hydrolysis of (1-&gt;6)-alpha-D-glucosidic linkages in some oligosaccharides produced from starch and glycogen by alpha-amylase, and in isomaltose.. In terms of biological role, alpha-glucosidase with broad substrate specificity for alpha-1,4- and alpha-1,6-glucosides. Not required for isomaltose utilization, but overexpression allows the IMA1 null mutant to grow on isomaltose. The protein is Oligo-1,6-glucosidase IMA3 (IMA3) of Saccharomyces cerevisiae (strain ATCC 204508 / S288c) (Baker's yeast).